We begin with the raw amino-acid sequence, 416 residues long: MSTTTRTLQAIKFDRDNIKLEILDQLLLPYSTSYIPINNIEDAFKAIKLMQVRGAPAIAIVGAFSVVVEVSNYLKQSDSNQKTIKNLNDSLNYLITSRPTAVNLANALNDIKQLLQKYNETDIIGEKIYQQIYDYAITLYDEDLANNKKIGENGLKYIIDTLTEQNFKGPFSIMTICNTGSLATSGHGTALGIIRSTYQALQKNNSKQDFWLDHIYPCETRPYNQGAKLTTYELDYEQIPFTLICDNMVSSLINTLSDDNKKPIKIDQSAPVKFIIVGADRIVENGDTANKIGTFQLSTIANFFNTNRFNTTATATNKQIKFIVAAPKTTIDLNTKTGDDIVIEERPANELTTLVGPLLNESGKVGEKLTVGIATPGISVWNPAFDVTPHELIDSIVTEDPHVFTKDKNGEFNLIK.

Catalysis depends on Asp280, which acts as the Proton donor.

Belongs to the eIF-2B alpha/beta/delta subunits family. MtnA subfamily.

Its subcellular location is the cytoplasm. The protein resides in the nucleus. The catalysed reaction is 5-(methylsulfanyl)-alpha-D-ribose 1-phosphate = 5-(methylsulfanyl)-D-ribulose 1-phosphate. Its pathway is amino-acid biosynthesis; L-methionine biosynthesis via salvage pathway; L-methionine from S-methyl-5-thio-alpha-D-ribose 1-phosphate: step 1/6. Catalyzes the interconversion of methylthioribose-1-phosphate (MTR-1-P) into methylthioribulose-1-phosphate (MTRu-1-P). The chain is Methylthioribose-1-phosphate isomerase from Candida albicans (strain SC5314 / ATCC MYA-2876) (Yeast).